The chain runs to 402 residues: Tryptophan--tRNA ligase, cytoplasmic (402 aa).

Positions Pro-97–His-106 match the 'HIGH' region motif. Residues Lys-280 to Ser-284 carry the 'KMSKS' region motif.

It belongs to the class-I aminoacyl-tRNA synthetase family.

It is found in the cytoplasm. The protein localises to the cytosol. It catalyses the reaction tRNA(Trp) + L-tryptophan + ATP = L-tryptophyl-tRNA(Trp) + AMP + diphosphate + H(+). The chain is Tryptophan--tRNA ligase, cytoplasmic from Arabidopsis thaliana (Mouse-ear cress).